The chain runs to 438 residues: Citrate synthase (438 aa).

Residues His306 and Asp364 contribute to the active site.

Belongs to the citrate synthase family.

It catalyses the reaction oxaloacetate + acetyl-CoA + H2O = citrate + CoA + H(+). The protein operates within carbohydrate metabolism; tricarboxylic acid cycle; isocitrate from oxaloacetate: step 1/2. This Bartonella quintana (strain Toulouse) (Rochalimaea quintana) protein is Citrate synthase (gltA).